The following is a 248-amino-acid chain: PF03932 family protein CutC (248 aa).

It belongs to the CutC family. Homodimer.

Its subcellular location is the cytoplasm. The sequence is that of PF03932 family protein CutC from Shigella boydii serotype 18 (strain CDC 3083-94 / BS512).